Here is a 261-residue protein sequence, read N- to C-terminus: Small ribosomal subunit protein eS4 (261 aa).

Positions 42–104 (LPLVIFLRNR…TGEFFRLIYD (63 aa)) constitute an S4 RNA-binding domain.

This sequence belongs to the eukaryotic ribosomal protein eS4 family.

The polypeptide is Small ribosomal subunit protein eS4 (RpS4) (Carabus granulatus (Ground beetle)).